We begin with the raw amino-acid sequence, 419 residues long: UDP-N-acetylglucosamine 1-carboxyvinyltransferase (419 aa).

Phosphoenolpyruvate is bound at residue 22-23; that stretch reads KN. R93 contributes to the UDP-N-acetyl-alpha-D-glucosamine binding site. Catalysis depends on C117, which acts as the Proton donor. At C117 the chain carries 2-(S-cysteinyl)pyruvic acid O-phosphothioketal. Residues D307 and I329 each coordinate UDP-N-acetyl-alpha-D-glucosamine.

The protein belongs to the EPSP synthase family. MurA subfamily.

The protein resides in the cytoplasm. The catalysed reaction is phosphoenolpyruvate + UDP-N-acetyl-alpha-D-glucosamine = UDP-N-acetyl-3-O-(1-carboxyvinyl)-alpha-D-glucosamine + phosphate. It functions in the pathway cell wall biogenesis; peptidoglycan biosynthesis. Functionally, cell wall formation. Adds enolpyruvyl to UDP-N-acetylglucosamine. This Pseudoalteromonas atlantica (strain T6c / ATCC BAA-1087) protein is UDP-N-acetylglucosamine 1-carboxyvinyltransferase.